Consider the following 63-residue polypeptide: Small ribosomal subunit protein eS17 (63 aa).

It belongs to the eukaryotic ribosomal protein eS17 family.

This chain is Small ribosomal subunit protein eS17, found in Methanosphaerula palustris (strain ATCC BAA-1556 / DSM 19958 / E1-9c).